The sequence spans 252 residues: Type III pantothenate kinase (252 aa).

Residue 6–13 coordinates ATP; the sequence is DIGNTTTE. Substrate-binding positions include tyrosine 100 and 107-110; that span reads GADR. The active-site Proton acceptor is the aspartate 109. Residue aspartate 129 participates in K(+) binding. Residue threonine 132 coordinates ATP. Threonine 184 serves as a coordination point for substrate.

The protein belongs to the type III pantothenate kinase family. Homodimer. NH4(+) is required as a cofactor. The cofactor is K(+).

It localises to the cytoplasm. It catalyses the reaction (R)-pantothenate + ATP = (R)-4'-phosphopantothenate + ADP + H(+). It participates in cofactor biosynthesis; coenzyme A biosynthesis; CoA from (R)-pantothenate: step 1/5. In terms of biological role, catalyzes the phosphorylation of pantothenate (Pan), the first step in CoA biosynthesis. The sequence is that of Type III pantothenate kinase from Sulfurihydrogenibium sp. (strain YO3AOP1).